The sequence spans 568 residues: Potassium-transporting ATPase potassium-binding subunit (568 aa).

11 helical membrane passes run 6 to 26 (ILQI…IGGF), 64 to 84 (TGYA…TYLI), 135 to 155 (IALA…AIAF), 179 to 199 (LYIL…QGVI), 254 to 274 (LANL…TYTF), 285 to 305 (WALL…VYPA), 382 to 402 (GLYG…LMVG), 419 to 439 (MVML…AAGI), 459 to 481 (VLYG…SANT), 488 to 508 (LGIA…AAAG), and 529 to 549 (LFVT…FFPA).

This sequence belongs to the KdpA family. As to quaternary structure, the system is composed of three essential subunits: KdpA, KdpB and KdpC.

Its subcellular location is the cell inner membrane. Part of the high-affinity ATP-driven potassium transport (or Kdp) system, which catalyzes the hydrolysis of ATP coupled with the electrogenic transport of potassium into the cytoplasm. This subunit binds the periplasmic potassium ions and delivers the ions to the membrane domain of KdpB through an intramembrane tunnel. The sequence is that of Potassium-transporting ATPase potassium-binding subunit from Solibacter usitatus (strain Ellin6076).